The primary structure comprises 228 residues: Ribose-5-phosphate isomerase A (228 aa).

Substrate-binding positions include 27–30 (TGTT), 86–89 (DGAD), and 100–103 (KGMG). Glu-109 functions as the Proton acceptor in the catalytic mechanism. Substrate is bound at residue Lys-127.

It belongs to the ribose 5-phosphate isomerase family. In terms of assembly, homodimer.

It catalyses the reaction aldehydo-D-ribose 5-phosphate = D-ribulose 5-phosphate. Its pathway is carbohydrate degradation; pentose phosphate pathway; D-ribose 5-phosphate from D-ribulose 5-phosphate (non-oxidative stage): step 1/1. Its function is as follows. Catalyzes the reversible conversion of ribose-5-phosphate to ribulose 5-phosphate. This chain is Ribose-5-phosphate isomerase A, found in Borreliella burgdorferi (strain ZS7) (Borrelia burgdorferi).